The sequence spans 205 residues: Holliday junction branch migration complex subunit RuvA (205 aa).

The domain I stretch occupies residues 1–64 (MIGRLRGIIL…EDAQLLFGFN (64 aa)). The segment at 65 to 142 (DKQERALFRE…KGLSGDLFNP (78 aa)) is domain II. The tract at residues 143–156 (VSDIPLASPASAES) is flexible linker. The segment at 157-205 (RASDPEAEAAAALVALGYKPQEASRMISKIARPEADCETLIRDALRAAL) is domain III.

The protein belongs to the RuvA family. Homotetramer. Forms an RuvA(8)-RuvB(12)-Holliday junction (HJ) complex. HJ DNA is sandwiched between 2 RuvA tetramers; dsDNA enters through RuvA and exits via RuvB. An RuvB hexamer assembles on each DNA strand where it exits the tetramer. Each RuvB hexamer is contacted by two RuvA subunits (via domain III) on 2 adjacent RuvB subunits; this complex drives branch migration. In the full resolvosome a probable DNA-RuvA(4)-RuvB(12)-RuvC(2) complex forms which resolves the HJ.

The protein resides in the cytoplasm. In terms of biological role, the RuvA-RuvB-RuvC complex processes Holliday junction (HJ) DNA during genetic recombination and DNA repair, while the RuvA-RuvB complex plays an important role in the rescue of blocked DNA replication forks via replication fork reversal (RFR). RuvA specifically binds to HJ cruciform DNA, conferring on it an open structure. The RuvB hexamer acts as an ATP-dependent pump, pulling dsDNA into and through the RuvAB complex. HJ branch migration allows RuvC to scan DNA until it finds its consensus sequence, where it cleaves and resolves the cruciform DNA. The polypeptide is Holliday junction branch migration complex subunit RuvA (Pectobacterium carotovorum subsp. carotovorum (strain PC1)).